Reading from the N-terminus, the 304-residue chain is Bacteriochlorophyll synthase 33 kDa chain (304 aa).

9 consecutive transmembrane segments (helical) span residues 26-46 (VTWF…NVPI), 51-71 (GVVV…SQAA), 94-114 (IPGL…LVVG), 117-137 (LGSW…AYSV), 151-171 (GLVG…VLLA), 178-198 (GFPI…IMTI), 227-247 (IACT…YLFS), 250-270 (YHAT…SVWM), and 279-299 (WYNG…AFAI).

The protein resides in the cell membrane. The protein operates within porphyrin-containing compound metabolism; bacteriochlorophyll biosynthesis (light-independent). Its function is as follows. Catalyzes the esterification of bacteriochlorophyllide a by geranylgeraniol-PPi. The sequence is that of Bacteriochlorophyll synthase 33 kDa chain (bchG) from Rhodobacter capsulatus (strain ATCC BAA-309 / NBRC 16581 / SB1003).